Consider the following 296-residue polypeptide: Diaminopimelate epimerase (296 aa).

Substrate contacts are provided by asparagine 17, glutamine 49, and asparagine 69. Cysteine 78 serves as the catalytic Proton donor. Substrate is bound by residues glycine 79–asparagine 80, asparagine 171, asparagine 205, and glutamate 223–arginine 224. The active-site Proton acceptor is the cysteine 232. Position 233-234 (glycine 233–threonine 234) interacts with substrate.

This sequence belongs to the diaminopimelate epimerase family. Homodimer.

It localises to the cytoplasm. The catalysed reaction is (2S,6S)-2,6-diaminopimelate = meso-2,6-diaminopimelate. Its pathway is amino-acid biosynthesis; L-lysine biosynthesis via DAP pathway; DL-2,6-diaminopimelate from LL-2,6-diaminopimelate: step 1/1. In terms of biological role, catalyzes the stereoinversion of LL-2,6-diaminopimelate (L,L-DAP) to meso-diaminopimelate (meso-DAP), a precursor of L-lysine and an essential component of the bacterial peptidoglycan. The sequence is that of Diaminopimelate epimerase from Methylorubrum extorquens (strain PA1) (Methylobacterium extorquens).